Consider the following 316-residue polypeptide: Pantothenate kinase (316 aa).

ATP is bound at residue 95–102; it reads GSVAVGKS.

The protein belongs to the prokaryotic pantothenate kinase family.

It localises to the cytoplasm. It catalyses the reaction (R)-pantothenate + ATP = (R)-4'-phosphopantothenate + ADP + H(+). It participates in cofactor biosynthesis; coenzyme A biosynthesis; CoA from (R)-pantothenate: step 1/5. The polypeptide is Pantothenate kinase (Shewanella halifaxensis (strain HAW-EB4)).